A 350-amino-acid polypeptide reads, in one-letter code: Neuronal-specific septin-3 (350 aa).

The span at 1–10 (MSKGLPEART) shows a compositional bias: basic and acidic residues. The segment at 1 to 29 (MSKGLPEARTDAAMSELVPEPRPKPAVPM) is disordered. The 274-residue stretch at 58–331 (TGFDFNIMVV…ETYRAKRLND (274 aa)) folds into the Septin-type G domain. Residues 68-75 (GQSGLGKS) are G1 motif. 68-75 (GQSGLGKS) is a binding site for GTP. Ser91 is modified (phosphoserine). GTP is bound at residue Thr102. The interval 125 to 128 (DTPG) is G3 motif. Residues 207-210 (AKAD) are G4 motif. GTP is bound by residues 208 to 216 (KADTMTLEE), Gly265, and Arg280. Residues 328–350 (RLNDNGGLPPVSVDTEESHDSNP) form a disordered region.

This sequence belongs to the TRAFAC class TrmE-Era-EngA-EngB-Septin-like GTPase superfamily. Septin GTPase family. As to quaternary structure, septins polymerize into heterooligomeric protein complexes that form filaments, and can associate with cellular membranes, actin filaments and microtubules. GTPase activity is required for filament formation. Post-translationally, phosphorylated by PKG on serine residues. Phosphorylated by PKG on Ser-91. Expressed in the brain including the cerebrum, hippocampus and cerebellum (at protein level).

It is found in the cytoplasm. The protein localises to the cytoskeleton. It localises to the synapse. Its function is as follows. Filament-forming cytoskeletal GTPase. May play a role in cytokinesis (Potential). This is Neuronal-specific septin-3 from Mus musculus (Mouse).